Consider the following 159-residue polypeptide: Eukaryotic translation initiation factor 5A (159 aa).

K51 bears the Hypusine mark.

The protein belongs to the eIF-5A family. Post-translationally, lys-51 undergoes hypusination, a unique post-translational modification that consists in the addition of a butylamino group from spermidine to lysine side chain, leading to the formation of the unusual amino acid hypusine. eIF-5As are the only known proteins to undergo this modification, which is essential for their function.

The protein localises to the cytoplasm. In terms of biological role, translation factor that promotes translation elongation and termination, particularly upon ribosome stalling at specific amino acid sequence contexts. Binds between the exit (E) and peptidyl (P) site of the ribosome and promotes rescue of stalled ribosome: specifically required for efficient translation of polyproline-containing peptides as well as other motifs that stall the ribosome. Acts as a ribosome quality control (RQC) cofactor by joining the RQC complex to facilitate peptidyl transfer during CAT tailing step. Functions as a regulator of autophagy. This chain is Eukaryotic translation initiation factor 5A, found in Drosophila melanogaster (Fruit fly).